The following is a 135-amino-acid chain: Large ribosomal subunit protein uL16c (135 aa).

Basic residues predominate over residues 1-17 (MLSPKRTKFRKQHRNRM). Residues 1–22 (MLSPKRTKFRKQHRNRMNGKAS) form a disordered region.

It belongs to the universal ribosomal protein uL16 family. As to quaternary structure, part of the 50S ribosomal subunit.

The protein resides in the plastid. Its subcellular location is the chloroplast. This chain is Large ribosomal subunit protein uL16c, found in Gracilaria tenuistipitata (Red alga).